The sequence spans 215 residues: Ribonuclease HII (215 aa).

The 192-residue stretch at Gly-24 to Asp-215 folds into the RNase H type-2 domain. 3 residues coordinate a divalent metal cation: Asp-30, Glu-31, and Asp-125.

The protein belongs to the RNase HII family. It depends on Mn(2+) as a cofactor. Mg(2+) serves as cofactor.

It is found in the cytoplasm. The catalysed reaction is Endonucleolytic cleavage to 5'-phosphomonoester.. Endonuclease that specifically degrades the RNA of RNA-DNA hybrids. The polypeptide is Ribonuclease HII (Zymomonas mobilis subsp. mobilis (strain ATCC 31821 / ZM4 / CP4)).